A 434-amino-acid polypeptide reads, in one-letter code: Trigger factor (434 aa).

The 86-residue stretch at 160–245 folds into the PPIase FKBP-type domain; it reads GDKVKMNFVG…LTEVLAANLP (86 aa).

This sequence belongs to the FKBP-type PPIase family. Tig subfamily.

The protein localises to the cytoplasm. The catalysed reaction is [protein]-peptidylproline (omega=180) = [protein]-peptidylproline (omega=0). In terms of biological role, involved in protein export. Acts as a chaperone by maintaining the newly synthesized protein in an open conformation. Functions as a peptidyl-prolyl cis-trans isomerase. This is Trigger factor from Shewanella sp. (strain ANA-3).